Here is a 336-residue protein sequence, read N- to C-terminus: tRNA N6-adenosine threonylcarbamoyltransferase (336 aa).

Residues His111, His115, and Tyr132 each contribute to the Fe cation site. Residues 132–136 (YLSGG), Asp164, Asp185, and Ser264 each bind substrate. Asp292 is a Fe cation binding site.

This sequence belongs to the KAE1 / TsaD family. Requires Fe(2+) as cofactor.

Its subcellular location is the cytoplasm. It catalyses the reaction L-threonylcarbamoyladenylate + adenosine(37) in tRNA = N(6)-L-threonylcarbamoyladenosine(37) in tRNA + AMP + H(+). In terms of biological role, required for the formation of a threonylcarbamoyl group on adenosine at position 37 (t(6)A37) in tRNAs that read codons beginning with adenine. Is probably involved in the transfer of the threonylcarbamoyl moiety of threonylcarbamoyl-AMP (TC-AMP) to the N6 group of A37. The polypeptide is tRNA N6-adenosine threonylcarbamoyltransferase (Sulfurisphaera tokodaii (strain DSM 16993 / JCM 10545 / NBRC 100140 / 7) (Sulfolobus tokodaii)).